Reading from the N-terminus, the 413-residue chain is Cardiolipin synthase B (413 aa).

PLD phosphodiesterase domains are found at residues 108 to 135 and 285 to 312; these read VFRRMHRKIVVIDARIAFIGGLNYSAEH and RRRPLHGKVALMDDHWATVGSSNLDPLS. Catalysis depends on residues His113, Lys115, Asp120, His290, Lys292, and Asp297. The segment at 390–413 is disordered; it reads VGPPAQPTMETQDRVETENTGVKP.

This sequence belongs to the phospholipase D family. Cardiolipin synthase subfamily. ClsB sub-subfamily.

Its subcellular location is the cell membrane. The enzyme catalyses 2 a 1,2-diacyl-sn-glycero-3-phospho-(1'-sn-glycerol) = a cardiolipin + glycerol. Catalyzes the phosphatidyl group transfer from one phosphatidylglycerol molecule to another to form cardiolipin (CL) (diphosphatidylglycerol) and glycerol. In Escherichia coli O6:H1 (strain CFT073 / ATCC 700928 / UPEC), this protein is Cardiolipin synthase B.